The sequence spans 263 residues: Thiazole synthase (263 aa).

Lysine 102 (schiff-base intermediate with DXP) is an active-site residue. 1-deoxy-D-xylulose 5-phosphate is bound by residues glycine 164, alanine 190–glycine 191, and asparagine 212–threonine 213.

It belongs to the ThiG family. As to quaternary structure, homotetramer. Forms heterodimers with either ThiH or ThiS.

It is found in the cytoplasm. The enzyme catalyses [ThiS sulfur-carrier protein]-C-terminal-Gly-aminoethanethioate + 2-iminoacetate + 1-deoxy-D-xylulose 5-phosphate = [ThiS sulfur-carrier protein]-C-terminal Gly-Gly + 2-[(2R,5Z)-2-carboxy-4-methylthiazol-5(2H)-ylidene]ethyl phosphate + 2 H2O + H(+). It functions in the pathway cofactor biosynthesis; thiamine diphosphate biosynthesis. In terms of biological role, catalyzes the rearrangement of 1-deoxy-D-xylulose 5-phosphate (DXP) to produce the thiazole phosphate moiety of thiamine. Sulfur is provided by the thiocarboxylate moiety of the carrier protein ThiS. In vitro, sulfur can be provided by H(2)S. This is Thiazole synthase from Helicobacter hepaticus (strain ATCC 51449 / 3B1).